Here is a 116-residue protein sequence, read N- to C-terminus: Large ribosomal subunit protein bL19 (116 aa).

It belongs to the bacterial ribosomal protein bL19 family.

In terms of biological role, this protein is located at the 30S-50S ribosomal subunit interface and may play a role in the structure and function of the aminoacyl-tRNA binding site. This Pseudomonas putida (strain W619) protein is Large ribosomal subunit protein bL19.